Reading from the N-terminus, the 261-residue chain is DNA repair protein RecO (261 aa).

Belongs to the RecO family.

Involved in DNA repair and RecF pathway recombination. This chain is DNA repair protein RecO, found in Limosilactobacillus reuteri (strain DSM 20016) (Lactobacillus reuteri).